Reading from the N-terminus, the 316-residue chain is Exonuclease DPD1, chloroplastic/mitochondrial (316 aa).

Residues Met-1 to Arg-63 constitute a chloroplast and mitochondrion transit peptide. The region spanning Ile-112–Phe-282 is the Exonuclease domain. Positions 115 and 117 each coordinate Mg(2+). Residue His-269 is the Proton donor/acceptor of the active site. Mg(2+) is bound at residue Asp-274.

Belongs to the exonuclease superfamily. TREX family. Mg(2+) serves as cofactor. Highly expressed in mature pollen grains. Detected in flowers, senescing leaves and roots.

It localises to the plastid. Its subcellular location is the chloroplast. The protein resides in the mitochondrion. Its activity is regulated as follows. Inhibited by free nucleotide diphosphates (NDPs). In terms of biological role, exonuclease required for organelle DNA degradation during pollen development. Plays non-essential roles in maternal inheritance. May be part of the DNA salvage machinery. The sequence is that of Exonuclease DPD1, chloroplastic/mitochondrial from Arabidopsis thaliana (Mouse-ear cress).